The following is a 313-amino-acid chain: Homoserine O-succinyltransferase (313 aa).

Cysteine 142 (acyl-thioester intermediate) is an active-site residue. The substrate site is built by lysine 163 and serine 192. Histidine 235 acts as the Proton acceptor in catalysis. Glutamate 237 is a catalytic residue. Arginine 249 serves as a coordination point for substrate.

The protein belongs to the MetA family.

It localises to the cytoplasm. It catalyses the reaction L-homoserine + succinyl-CoA = O-succinyl-L-homoserine + CoA. The protein operates within amino-acid biosynthesis; L-methionine biosynthesis via de novo pathway; O-succinyl-L-homoserine from L-homoserine: step 1/1. Its function is as follows. Transfers a succinyl group from succinyl-CoA to L-homoserine, forming succinyl-L-homoserine. This Vibrio campbellii (strain ATCC BAA-1116) protein is Homoserine O-succinyltransferase.